Consider the following 517-residue polypeptide: Sugar transport protein MST1 (517 aa).

Over 1-25 (MAGGVIVANDGDGSAVDHGGRLTFS) the chain is Cytoplasmic. The chain crosses the membrane as a helical span at residues 26-46 (VVITCLVAASGGLIFGYDVGI). Residues 47–83 (SGGVSTMEPFLRRFFPGVVRRMAEARPGNEYCVYDSQ) are Extracellular-facing. Residues 84–104 (ALTAFTSSLYVAGLVASLVAS) form a helical membrane-spanning segment. At 105–120 (RVTRAMGRQAVMVMGG) the chain is on the cytoplasmic side. Residues 121-141 (ALFFAGGAVTGFAVNIAMLIV) traverse the membrane as a helical segment. The Extracellular segment spans residues 142–143 (GR). Residues 144–164 (MLLGFGVGFTNQAAPLFLAEM) form a helical membrane-spanning segment. The Cytoplasmic segment spans residues 165 to 170 (APTRWR). A helical transmembrane segment spans residues 171-191 (GSLTAGFQFFLAVGVVIATVT). Topologically, residues 192–203 (NYFASRVPWGWR) are extracellular. A helical membrane pass occupies residues 204-224 (LSLGLAGAPAVVIFLGALFLT). At 225–288 (DTPSSLVMRG…AARREYRPYL (64 aa)) the chain is on the cytoplasmic side. Residues 289–309 (VFAVAMPMFFQLTGVIVISFF) traverse the membrane as a helical segment. At 310 to 325 (SPLVFRTVGFGSNAAL) the chain is on the extracellular side. A helical transmembrane segment spans residues 326–346 (MGNVILGAVNLVCLMLSTLVI). The Cytoplasmic segment spans residues 347-352 (DRYGRK). Residues 353–373 (VLFMVGGAIMIIAQVGVAWIM) traverse the membrane as a helical segment. Residues 374–389 (GAQVGKNGSEAMARPY) are Extracellular-facing. A helical membrane pass occupies residues 390–410 (AVAVVAFTCLHTAGFGWSWGP). Topologically, residues 411–430 (LGWVIPGEIFPVDIRSAGQA) are cytoplasmic. A helical transmembrane segment spans residues 431-451 (MNVSIGLGLTFVQTQSFLAML). Topologically, residues 452–456 (CRFRY) are extracellular. Residues 457-477 (GTFAYYAAWVAVMTVFIAVFL) traverse the membrane as a helical segment. The Cytoplasmic segment spans residues 478 to 517 (PETKGVPLESMATVWARHWYWKRFAREQPKTSADEPTGTY).

This sequence belongs to the major facilitator superfamily. Sugar transporter (TC 2.A.1.1) family.

Its subcellular location is the membrane. Mediates active uptake of hexoses by sugar:proton symport. In Oryza sativa subsp. japonica (Rice), this protein is Sugar transport protein MST1.